The following is a 111-amino-acid chain: Small ribosomal subunit protein bS16 (111 aa).

Belongs to the bacterial ribosomal protein bS16 family.

This is Small ribosomal subunit protein bS16 from Rickettsia africae (strain ESF-5).